The sequence spans 355 residues: 3-dehydroquinate synthase (355 aa).

Residues 98 to 102, 122 to 123, lysine 135, lysine 144, and 162 to 165 each bind NAD(+); these read GVIGD, TT, and TLNT. Residues glutamate 177, histidine 240, and histidine 257 each contribute to the Zn(2+) site.

This sequence belongs to the sugar phosphate cyclases superfamily. Dehydroquinate synthase family. It depends on Co(2+) as a cofactor. Zn(2+) is required as a cofactor. The cofactor is NAD(+).

The protein localises to the cytoplasm. The catalysed reaction is 7-phospho-2-dehydro-3-deoxy-D-arabino-heptonate = 3-dehydroquinate + phosphate. It participates in metabolic intermediate biosynthesis; chorismate biosynthesis; chorismate from D-erythrose 4-phosphate and phosphoenolpyruvate: step 2/7. Catalyzes the conversion of 3-deoxy-D-arabino-heptulosonate 7-phosphate (DAHP) to dehydroquinate (DHQ). The polypeptide is 3-dehydroquinate synthase (Dictyoglomus thermophilum (strain ATCC 35947 / DSM 3960 / H-6-12)).